A 419-amino-acid chain; its full sequence is Subtilisin-like protease 2 (419 aa).

The first 16 residues, 1–16 (MQLLNFGLLLLPFVAG), serve as a signal peptide directing secretion. The propeptide occupies 17 to 122 (DLAPQPEPLL…VHPDQHVYLA (106 aa)). Residues 36–122 (QYIVTLKEGL…VHPDQHVYLA (87 aa)) enclose the Inhibitor I9 domain. The Peptidase S8 domain occupies 131–419 (RWGLGYMSSK…IQERKFKLPK (289 aa)). Catalysis depends on charge relay system residues Asp169 and His201. N-linked (GlcNAc...) asparagine glycosylation is found at Asn248, Asn261, and Asn348. Ser357 (charge relay system) is an active-site residue. A glycan (N-linked (GlcNAc...) asparagine) is linked at Asn388.

It belongs to the peptidase S8 family.

The protein localises to the secreted. Secreted subtilisin-like serine protease with keratinolytic activity that contributes to pathogenicity. This Trichophyton verrucosum (Cattle ringworm fungus) protein is Subtilisin-like protease 2 (SUB2).